We begin with the raw amino-acid sequence, 186 residues long: Shikimate kinase (186 aa).

Residue 15-20 (GAGKTT) coordinates ATP. Threonine 19 is a binding site for Mg(2+). Positions 37, 61, and 83 each coordinate substrate. Residue arginine 121 coordinates ATP. Arginine 140 contacts substrate.

The protein belongs to the shikimate kinase family. Monomer. It depends on Mg(2+) as a cofactor.

The protein localises to the cytoplasm. The catalysed reaction is shikimate + ATP = 3-phosphoshikimate + ADP + H(+). It functions in the pathway metabolic intermediate biosynthesis; chorismate biosynthesis; chorismate from D-erythrose 4-phosphate and phosphoenolpyruvate: step 5/7. Its function is as follows. Catalyzes the specific phosphorylation of the 3-hydroxyl group of shikimic acid using ATP as a cosubstrate. The sequence is that of Shikimate kinase from Psychrobacter cryohalolentis (strain ATCC BAA-1226 / DSM 17306 / VKM B-2378 / K5).